Consider the following 214-residue polypeptide: Large ribosomal subunit protein bL25 (214 aa).

The disordered stretch occupies residues 178 to 214; it reads VEPEEEELPETDEEGEGAEGEAAEAAEGESAEGESEE. Positions 179-214 are enriched in acidic residues; the sequence is EPEEEELPETDEEGEGAEGEAAEAAEGESAEGESEE.

It belongs to the bacterial ribosomal protein bL25 family. CTC subfamily. In terms of assembly, part of the 50S ribosomal subunit; part of the 5S rRNA/L5/L18/L25 subcomplex. Contacts the 5S rRNA. Binds to the 5S rRNA independently of L5 and L18.

In terms of biological role, this is one of the proteins that binds to the 5S RNA in the ribosome where it forms part of the central protuberance. This chain is Large ribosomal subunit protein bL25, found in Corynebacterium jeikeium (strain K411).